Reading from the N-terminus, the 446-residue chain is Signal recognition particle 54 kDa protein (446 aa).

GTP is bound by residues glycine 103 to threonine 110, aspartate 185 to arginine 189, and threonine 245 to aspartate 248.

Belongs to the GTP-binding SRP family. SRP54 subfamily. Part of the signal recognition particle protein translocation system, which is composed of SRP and FtsY. Archaeal SRP consists of a 7S RNA molecule of 300 nucleotides and two protein subunits: SRP54 and SRP19.

The protein localises to the cytoplasm. It carries out the reaction GTP + H2O = GDP + phosphate + H(+). In terms of biological role, involved in targeting and insertion of nascent membrane proteins into the cytoplasmic membrane. Binds to the hydrophobic signal sequence of the ribosome-nascent chain (RNC) as it emerges from the ribosomes. The SRP-RNC complex is then targeted to the cytoplasmic membrane where it interacts with the SRP receptor FtsY. The chain is Signal recognition particle 54 kDa protein from Metallosphaera sedula (strain ATCC 51363 / DSM 5348 / JCM 9185 / NBRC 15509 / TH2).